The primary structure comprises 191 residues: Pyridoxal 5'-phosphate synthase subunit PdxT (191 aa).

52–54 (GES) serves as a coordination point for L-glutamine. The Nucleophile role is filled by Cys-81. L-glutamine is bound by residues Arg-108 and 136–137 (IR). Catalysis depends on charge relay system residues His-172 and Glu-174.

It belongs to the glutaminase PdxT/SNO family. In terms of assembly, in the presence of PdxS, forms a dodecamer of heterodimers. Only shows activity in the heterodimer.

The enzyme catalyses aldehydo-D-ribose 5-phosphate + D-glyceraldehyde 3-phosphate + L-glutamine = pyridoxal 5'-phosphate + L-glutamate + phosphate + 3 H2O + H(+). It carries out the reaction L-glutamine + H2O = L-glutamate + NH4(+). It participates in cofactor biosynthesis; pyridoxal 5'-phosphate biosynthesis. Catalyzes the hydrolysis of glutamine to glutamate and ammonia as part of the biosynthesis of pyridoxal 5'-phosphate. The resulting ammonia molecule is channeled to the active site of PdxS. The sequence is that of Pyridoxal 5'-phosphate synthase subunit PdxT from Actinobacillus pleuropneumoniae serotype 5b (strain L20).